We begin with the raw amino-acid sequence, 316 residues long: UDP-3-O-acylglucosamine N-acyltransferase 2 (316 aa).

Histidine 230 (proton acceptor) is an active-site residue.

Belongs to the transferase hexapeptide repeat family. LpxD subfamily. As to quaternary structure, homotrimer.

The enzyme catalyses a UDP-3-O-[(3R)-3-hydroxyacyl]-alpha-D-glucosamine + a (3R)-hydroxyacyl-[ACP] = a UDP-2-N,3-O-bis[(3R)-3-hydroxyacyl]-alpha-D-glucosamine + holo-[ACP] + H(+). It functions in the pathway bacterial outer membrane biogenesis; LPS lipid A biosynthesis. Catalyzes the N-acylation of UDP-3-O-acylglucosamine using 3-hydroxyacyl-ACP as the acyl donor. Is involved in the biosynthesis of lipid A, a phosphorylated glycolipid that anchors the lipopolysaccharide to the outer membrane of the cell. The protein is UDP-3-O-acylglucosamine N-acyltransferase 2 of Sulfurimonas denitrificans (strain ATCC 33889 / DSM 1251) (Thiomicrospira denitrificans (strain ATCC 33889 / DSM 1251)).